Here is a 442-residue protein sequence, read N- to C-terminus: tRNA modification GTPase MnmE (442 aa).

Arg21, Glu79, and Lys118 together coordinate (6S)-5-formyl-5,6,7,8-tetrahydrofolate. Residues 214–367 (GFKIAIVGKP…LKEELQNYLN (154 aa)) enclose the TrmE-type G domain. Residue Asn224 participates in K(+) binding. Residues 224 to 229 (NVGKSS), 243 to 249 (SDIAGTT), and 268 to 271 (DTAG) contribute to the GTP site. Ser228 provides a ligand contact to Mg(2+). Positions 243, 245, and 248 each coordinate K(+). Mg(2+) is bound at residue Thr249. Lys442 provides a ligand contact to (6S)-5-formyl-5,6,7,8-tetrahydrofolate.

This sequence belongs to the TRAFAC class TrmE-Era-EngA-EngB-Septin-like GTPase superfamily. TrmE GTPase family. In terms of assembly, homodimer. Heterotetramer of two MnmE and two MnmG subunits. The cofactor is K(+).

Its subcellular location is the cytoplasm. Its function is as follows. Exhibits a very high intrinsic GTPase hydrolysis rate. Involved in the addition of a carboxymethylaminomethyl (cmnm) group at the wobble position (U34) of certain tRNAs, forming tRNA-cmnm(5)s(2)U34. The sequence is that of tRNA modification GTPase MnmE from Campylobacter jejuni (strain RM1221).